We begin with the raw amino-acid sequence, 87 residues long: Phosphoribosyl-ATP pyrophosphatase (87 aa).

It belongs to the PRA-PH family.

The protein resides in the cytoplasm. It catalyses the reaction 1-(5-phospho-beta-D-ribosyl)-ATP + H2O = 1-(5-phospho-beta-D-ribosyl)-5'-AMP + diphosphate + H(+). The protein operates within amino-acid biosynthesis; L-histidine biosynthesis; L-histidine from 5-phospho-alpha-D-ribose 1-diphosphate: step 2/9. The polypeptide is Phosphoribosyl-ATP pyrophosphatase (Salinibacter ruber (strain DSM 13855 / M31)).